Reading from the N-terminus, the 464-residue chain is Cysteine--tRNA ligase (464 aa).

Cys-29 contributes to the Zn(2+) binding site. A 'HIGH' region motif is present at residues 31–41; the sequence is ATVQGDPHIGH. Positions 207, 232, and 236 each coordinate Zn(2+). The 'KMSKS' region signature appears at 263-267; sequence KMSKS. Lys-266 lines the ATP pocket.

The protein belongs to the class-I aminoacyl-tRNA synthetase family. Monomer. Requires Zn(2+) as cofactor.

Its subcellular location is the cytoplasm. It carries out the reaction tRNA(Cys) + L-cysteine + ATP = L-cysteinyl-tRNA(Cys) + AMP + diphosphate. The sequence is that of Cysteine--tRNA ligase from Rhodococcus jostii (strain RHA1).